We begin with the raw amino-acid sequence, 400 residues long: Phosphoglycerate kinase (400 aa).

Residues 19–21 (DLN), R38, 61–64 (HLGR), R124, and R161 contribute to the substrate site. ATP contacts are provided by residues K211, G299, E330, and 356 to 359 (GGDS).

The protein belongs to the phosphoglycerate kinase family. As to quaternary structure, monomer.

It is found in the cytoplasm. It carries out the reaction (2R)-3-phosphoglycerate + ATP = (2R)-3-phospho-glyceroyl phosphate + ADP. It participates in carbohydrate degradation; glycolysis; pyruvate from D-glyceraldehyde 3-phosphate: step 2/5. This Frankia casuarinae (strain DSM 45818 / CECT 9043 / HFP020203 / CcI3) protein is Phosphoglycerate kinase.